A 61-amino-acid chain; its full sequence is Small ribosomal subunit protein uS14B (61 aa).

Residues Cys24, Cys27, Cys40, and Cys43 each coordinate Zn(2+).

The protein belongs to the universal ribosomal protein uS14 family. Zinc-binding uS14 subfamily. Part of the 30S ribosomal subunit. Contacts proteins S3 and S10. The cofactor is Zn(2+).

In terms of biological role, binds 16S rRNA, required for the assembly of 30S particles and may also be responsible for determining the conformation of the 16S rRNA at the A site. The chain is Small ribosomal subunit protein uS14B from Myxococcus xanthus (strain DK1622).